The primary structure comprises 185 residues: MAETAYVPRLRAEYDKSIRSRLTEQFGYVNVMQVPRLDKVVLNMGIGEAVNDRKKAEAAAGDLSLIAGQKAVVTYSRVAISTFKLRENQPIGCKVTLRKTKMYEFIDRLVNVALPRVRDFRGLNPKSFDGRGNYSLGIKEHIIFPEIDFDKVGESWGMDVTVCTTAQTDDEARALLTAFNFPFRQ.

This sequence belongs to the universal ribosomal protein uL5 family. Part of the 50S ribosomal subunit; part of the 5S rRNA/L5/L18/L25 subcomplex. Contacts the 5S rRNA and the P site tRNA. Forms a bridge to the 30S subunit in the 70S ribosome.

In terms of biological role, this is one of the proteins that bind and probably mediate the attachment of the 5S RNA into the large ribosomal subunit, where it forms part of the central protuberance. In the 70S ribosome it contacts protein S13 of the 30S subunit (bridge B1b), connecting the 2 subunits; this bridge is implicated in subunit movement. Contacts the P site tRNA; the 5S rRNA and some of its associated proteins might help stabilize positioning of ribosome-bound tRNAs. The polypeptide is Large ribosomal subunit protein uL5 (Nitrobacter winogradskyi (strain ATCC 25391 / DSM 10237 / CIP 104748 / NCIMB 11846 / Nb-255)).